Reading from the N-terminus, the 229-residue chain is Cytidylate kinase (229 aa).

Residue 12-20 (GPSGSGKGT) participates in ATP binding.

This sequence belongs to the cytidylate kinase family. Type 1 subfamily.

The protein resides in the cytoplasm. It catalyses the reaction CMP + ATP = CDP + ADP. The enzyme catalyses dCMP + ATP = dCDP + ADP. The polypeptide is Cytidylate kinase (Azotobacter vinelandii (strain DJ / ATCC BAA-1303)).